Reading from the N-terminus, the 179-residue chain is Bifunctional protein PyrR (179 aa).

The PRPP-binding motif lies at 97 to 109 (VILIDDVLFTGRT).

It belongs to the purine/pyrimidine phosphoribosyltransferase family. PyrR subfamily.

The enzyme catalyses UMP + diphosphate = 5-phospho-alpha-D-ribose 1-diphosphate + uracil. Regulates the transcription of the pyrimidine nucleotide (pyr) operon in response to exogenous pyrimidines. Functionally, also displays a weak uracil phosphoribosyltransferase activity which is not physiologically significant. This chain is Bifunctional protein PyrR, found in Actinobacillus pleuropneumoniae serotype 5b (strain L20).